The following is a 289-amino-acid chain: MIAGTRGSRLALVQTNHVIEMLSEVCKEKIEKKIIKTKGDRIRDSQLYSMDSRGLFTRELDMAVLNEEVDLAVHSLKDVPSDLDPDLAIAAVPPRESPAEVLVSRLDWEDLPQGSKLGTSSLRREAFCNHHQKNFKMEPLRGNIDTRIRKVMDGEVHATIMAEAGLKRLGLEEHIKRRFPVEYFTPAAGQGALAVITRADSELISSIGRITHHPSLQEVTAEKTLLRELGAGCQCPLGVIGRATGNQLTLYAVLLTREGEMLRKVTVRGPLAEAEDIGKKAAKEMEDYI.

S-(dipyrrolylmethanemethyl)cysteine is present on C233.

The protein belongs to the HMBS family. The cofactor is dipyrromethane.

The enzyme catalyses 4 porphobilinogen + H2O = hydroxymethylbilane + 4 NH4(+). It participates in porphyrin-containing compound metabolism; protoporphyrin-IX biosynthesis; coproporphyrinogen-III from 5-aminolevulinate: step 2/4. Tetrapolymerization of the monopyrrole PBG into the hydroxymethylbilane pre-uroporphyrinogen in several discrete steps. This is Probable porphobilinogen deaminase (hemC) from Methanothermobacter thermautotrophicus (strain ATCC 29096 / DSM 1053 / JCM 10044 / NBRC 100330 / Delta H) (Methanobacterium thermoautotrophicum).